We begin with the raw amino-acid sequence, 309 residues long: Protein FdhE homolog (309 aa).

This sequence belongs to the FdhE family.

The protein resides in the cytoplasm. Its function is as follows. Necessary for formate dehydrogenase activity. The protein is Protein FdhE homolog of Yersinia enterocolitica serotype O:8 / biotype 1B (strain NCTC 13174 / 8081).